The primary structure comprises 288 residues: MNPYRSYDARIIEVKELTSREKLFSLKFLDNEIEENFTFKPGQFVIVDIRGFGEFPISLCSSPTRRPIQLCIRRVGRMTKFIHKMNEGDIIGIRGPYGNGFPMDLMEGSNLILIAGGLGMAPLRSVLWYAIDSGKYEKIYLFYGTKSYEDILFRDEIIHLLKHGEKLNCHVKLAYEVETPSCIYLERGFSEKVCKGVVTDLFRGEEFDVENSYALICGPPVMYKYVIRELLDRGLSPGRIYMTLERRMRCGVGKCGHCIVGTSVSIKYICKDGPVFTYWDALSTRGLI.

In terms of domain architecture, FAD-binding FR-type spans 4–103 (YRSYDARIIE…RGPYGNGFPM (100 aa)). [2Fe-2S] cluster contacts are provided by Cys-250, Cys-255, Cys-258, and Cys-270.

As to quaternary structure, dimer of heterotetramer of alpha, beta, gamma and delta subunits. The nickel-containing alpha and delta subunits constitute the hydrogenase activity. The beta and gamma subunits (flavin-containing dimer) constitute the sulfur reductase activity. FAD serves as cofactor. [2Fe-2S] cluster is required as a cofactor.

The protein localises to the cytoplasm. The catalysed reaction is n sulfur + H2 = (n-1) sulfur + hydrogen sulfide + H(+). Part of a bifunctional enzyme complex that functions as a hydrogen-evolving hydrogenase with sulfur-reducing activity. May play a role in hydrogen cycling during fermentative growth. Activity exhibited with NAD in addition to NADPH. The beta and gamma subunits form the sulfur-reducing component that catalyzes the cytoplasmic production of hydrogen sulfide in the presence of elemental sulfur. This chain is Sulfhydrogenase 2 subunit gamma, found in Pyrococcus furiosus (strain ATCC 43587 / DSM 3638 / JCM 8422 / Vc1).